The sequence spans 273 residues: Putative deoxyribonuclease TATDN1 homolog (273 aa).

Positions 91, 125, 147, and 195 each coordinate a divalent metal cation.

It belongs to the metallo-dependent hydrolases superfamily. TatD-type hydrolase family. A divalent metal cation is required as a cofactor.

The protein resides in the nucleus. In terms of biological role, putative deoxyribonuclease. This chain is Putative deoxyribonuclease TATDN1 homolog, found in Encephalitozoon cuniculi (strain GB-M1) (Microsporidian parasite).